Reading from the N-terminus, the 440-residue chain is Tyrosine--tRNA ligase (440 aa).

L-tyrosine is bound at residue tyrosine 46. Residues 51–60 (PTAPSLHIGN) carry the 'HIGH' region motif. L-tyrosine-binding residues include tyrosine 181 and glutamine 185. The 'KMSKS' region signature appears at 241–245 (KFGKS). Lysine 244 lines the ATP pocket. The 58-residue stretch at 373–430 (DRIAQAGVSAGLFKSISEARKTIKSGGVYVNNVRVEDEEQLLGDGDFLKGRFVVLRRG) folds into the S4 RNA-binding domain.

Belongs to the class-I aminoacyl-tRNA synthetase family. TyrS type 1 subfamily. As to quaternary structure, homodimer.

It is found in the cytoplasm. The enzyme catalyses tRNA(Tyr) + L-tyrosine + ATP = L-tyrosyl-tRNA(Tyr) + AMP + diphosphate + H(+). Catalyzes the attachment of tyrosine to tRNA(Tyr) in a two-step reaction: tyrosine is first activated by ATP to form Tyr-AMP and then transferred to the acceptor end of tRNA(Tyr). In Bifidobacterium animalis subsp. lactis (strain AD011), this protein is Tyrosine--tRNA ligase.